The chain runs to 434 residues: Cysteine--tRNA ligase (434 aa).

C28 contributes to the Zn(2+) binding site. The 'HIGH' region motif lies at 30–40; it reads PTVYDDIHIGN. 3 residues coordinate Zn(2+): C207, H232, and E236. The 'KMSKS' region signature appears at 264-268; the sequence is KMSKS. K267 contacts ATP.

This sequence belongs to the class-I aminoacyl-tRNA synthetase family. In terms of assembly, monomer. Requires Zn(2+) as cofactor.

It localises to the cytoplasm. The enzyme catalyses tRNA(Cys) + L-cysteine + ATP = L-cysteinyl-tRNA(Cys) + AMP + diphosphate. The chain is Cysteine--tRNA ligase from Acholeplasma laidlawii (strain PG-8A).